Consider the following 329-residue polypeptide: (+)-eremophilene synthase (329 aa).

Residues Asp-91 and Glu-96 each coordinate Mg(2+). A DDXXD motif motif is present at residues 91 to 95 (DDAYD). A substrate-binding site is contributed by Arg-185. Mg(2+) is bound by residues Asn-231 and Ser-235. Substrate is bound at residue Lys-238. Glu-239 is a Mg(2+) binding site. A substrate-binding site is contributed by 317–318 (RY).

It belongs to the terpene synthase family. It depends on Mg(2+) as a cofactor.

It carries out the reaction (2E,6E)-farnesyl diphosphate = (+)-eremophilene + diphosphate. The protein operates within secondary metabolite biosynthesis; terpenoid biosynthesis. In terms of biological role, catalyzes the conversion of (2E,6E)-farnesyl diphosphate (FPP) to yield the bicyclic sesquiterpene eremophilene via a 1,10-cyclization, which requires the abstraction of the pyrophosphate from FPP to yield the (E,E)-germacradienyl cation. The only accepted substrate is farnesyl diphosphate (FPP). The protein is (+)-eremophilene synthase of Sorangium cellulosum (strain So ce56) (Polyangium cellulosum (strain So ce56)).